The chain runs to 1538 residues: Dicer-like protein 1 (1538 aa).

The tract at residues 39 to 72 (DPAESSADVHKDEHSSDNSDNDNEAVPKPNDFSQ) is disordered. A compositionally biased stretch (basic and acidic residues) spans 45–55 (ADVHKDEHSSD). Residues 134 to 315 (LFERAKTQNT…EAATRLETLL (182 aa)) enclose the Helicase ATP-binding domain. 147 to 154 (LDTGSGKT) provides a ligand contact to ATP. A DEAH box motif is present at residues 260–263 (DEAH). Positions 460–619 (ELSKHFSDTT…ETLPEDRILH (160 aa)) constitute a Helicase C-terminal domain. The Dicer dsRNA-binding fold domain maps to 652 to 742 (AIAILARYAS…NSIYHRRLPA (91 aa)). The 129-residue stretch at 892-1020 (DTVSFVHNND…ICAEPLRISA (129 aa)) folds into the PAZ domain. 2 consecutive RNase III domains span residues 1044–1203 (IALE…LSGG) and 1254–1406 (ARHV…VDSK). E1295, D1392, and E1395 together coordinate Mg(2+). The DRBM domain occupies 1440–1508 (TFLHNKLTNE…SEKALAVLDG (69 aa)). The Zn(2+) site is built by C1452, H1479, C1520, and C1522.

It belongs to the helicase family. Dicer subfamily. Mg(2+) is required as a cofactor. The cofactor is Mn(2+).

Dicer-like endonuclease involved in cleaving double-stranded RNA in the RNA interference (RNAi) pathway. Produces 21 to 25 bp dsRNAs (siRNAs) which target the selective destruction of homologous RNAs leading to sequence-specific suppression of gene expression, called post-transcriptional gene silencing (PTGS). Part of a broad host defense response against viral infection and transposons. This chain is Dicer-like protein 1 (dcl1), found in Neosartorya fischeri (strain ATCC 1020 / DSM 3700 / CBS 544.65 / FGSC A1164 / JCM 1740 / NRRL 181 / WB 181) (Aspergillus fischerianus).